The sequence spans 492 residues: MRPRRRGLAYHHTKPKGQLSQGHYPTTSNDGQRRKVGNSEAFQSFDIWKNLDRIRSTKKNAGQFIKGSLLILPMRTEDKQQFDECMDELHKYISKDILRCYPQKEQKDEGMLFYIVLKDFNILDSCFVLSVLLAFQKRLWMAPSEKSYFRVPKNINLTGSFYLPKNIETGRGHIITSYRREQPSSSIVEVGFNVVPDFQQFQVKACHVSKFMNELSNFFSQVEFGKCEANVINYFKREYNRTYSQISLALYELPLIGDGLFDIKSYISKTRPIIETSKAQMIKHISEMKAYNEISGLQGDQFPRQQRPLSNSPSSNSISSSQTIEAGATSYQTQPQRHAVNKPSNVLNSSNRHSGPKTFEDGRYSEGNKPGFMTQDEIKQHCIGTIKASMDAVKKKSSYQILKTYVRCPRQNYIDIVYQNLNDLRSKTNCNIVVLNLNNLHESQMWLESLNTTNYTIFAQAPHPSTIRVISIGGVGEYIVKALELILNILEH.

Residues 1–15 are compositionally biased toward basic residues; the sequence is MRPRRRGLAYHHTKP. 2 disordered regions span residues 1-35 and 300-371; these read MRPR…QRRK and DQFP…NKPG. The segment covering 18–30 has biased composition (polar residues); it reads QLSQGHYPTTSND. Over residues 310–321 the composition is skewed to low complexity; sequence SNSPSSNSISSS. The segment covering 329-353 has biased composition (polar residues); sequence TSYQTQPQRHAVNKPSNVLNSSNRH.

In terms of assembly, component of the 18S U1 snRNP particle, a subcomplex of the spliceosome. Interacts with the nuclear cap-binding complex CBC1-CBC2 (yCBC). Directly contacts intronic sequences of substrate pre-RNA.

It is found in the nucleus. Functionally, component of the U1 snRNP particle, which recognizes and binds the 5'-splice site of pre-mRNA. Together with other non-snRNP factors, U1 snRNP forms the spliceosomal commitment complex, that targets pre-mRNA to the splicing pathway. The sequence is that of 56 kDa U1 small nuclear ribonucleoprotein component (SNU56) from Saccharomyces cerevisiae (strain ATCC 204508 / S288c) (Baker's yeast).